Here is a 570-residue protein sequence, read N- to C-terminus: GDP-Man:Man(3)GlcNAc(2)-PP-Dol alpha-1,2-mannosyltransferase (570 aa).

Over 1–7 the chain is Lumenal; the sequence is MKLADFV. A helical transmembrane segment spans residues 8–70; sequence TYVFGSLLAG…DFGWKNSSVR (63 aa). Residues 71–200 lie on the Cytoplasmic side of the membrane; sequence RAFILASERP…RLVESKSWPK (130 aa). An intramembrane region (helical) is located at residues 201-221; it reads FTLLGQAYGSIILSIEALTTL. The Cytoplasmic portion of the chain corresponds to 222-446; that stretch reads APDYWIDTMG…FGINAMWNEH (225 aa). The segment at residues 447–467 is an intramembrane region (helical); the sequence is FGIAVVEYMASGLIPLCHASA. The Cytoplasmic portion of the chain corresponds to 468–570; that stretch reads GPLYDIVVPW…LNLTHNRMFS (103 aa).

This sequence belongs to the glycosyltransferase group 1 family.

The protein localises to the endoplasmic reticulum membrane. The enzyme catalyses an alpha-D-Man-(1-&gt;3)-[alpha-D-Man-(1-&gt;6)]-beta-D-Man-(1-&gt;4)-beta-D-GlcNAc-(1-&gt;4)-alpha-D-GlcNAc-diphospho-di-trans,poly-cis-dolichol + 2 GDP-alpha-D-mannose = an alpha-D-Man-(1-&gt;2)-alpha-D-Man-(1-&gt;2)-alpha-D-Man-(1-&gt;3)-[alpha-D-Man-(1-&gt;6)]-beta-D-Man-(1-&gt;4)-beta-D-GlcNAc-(1-&gt;4)-alpha-D-GlcNAc-diphospho-di-trans,poly-cis-dolichol + 2 GDP + 2 H(+). The protein operates within protein modification; protein glycosylation. GDP-Man:Man(3)GlcNAc(2)-PP-Dol alpha-1,2-mannosyltransferase that operates in the biosynthetic pathway of dolichol-linked oligosaccharides, the glycan precursors employed in protein asparagine (N)-glycosylation. The assembly of dolichol-linked oligosaccharides begins on the cytosolic side of the endoplasmic reticulum membrane and finishes in its lumen. The sequential addition of sugars to dolichol pyrophosphate produces dolichol-linked oligosaccharides containing fourteen sugars, including two GlcNAcs, nine mannoses and three glucoses. Once assembled, the oligosaccharide is transferred from the lipid to nascent proteins by oligosaccharyltransferases. Catalyzes, on the cytoplasmic face of the endoplasmic reticulum, the addition of the fourth and fifth mannose residues to the dolichol-linked oligosaccharide chain, to produce Man(5)GlcNAc(2)-PP-dolichol core oligosaccharide. The polypeptide is GDP-Man:Man(3)GlcNAc(2)-PP-Dol alpha-1,2-mannosyltransferase (ALG11) (Kluyveromyces lactis (strain ATCC 8585 / CBS 2359 / DSM 70799 / NBRC 1267 / NRRL Y-1140 / WM37) (Yeast)).